A 273-amino-acid chain; its full sequence is Phosphate import ATP-binding protein PstB (273 aa).

In terms of domain architecture, ABC transporter spans 17–259; it reads LSAENLSIFY…DKTNNIFQNP (243 aa). Residue 49-56 participates in ATP binding; that stretch reads GPSGCGKS.

The protein belongs to the ABC transporter superfamily. Phosphate importer (TC 3.A.1.7) family. The complex is composed of two ATP-binding proteins (PstB), two transmembrane proteins (PstC and PstA) and a solute-binding protein (PstS).

It is found in the cell inner membrane. The catalysed reaction is phosphate(out) + ATP + H2O = ADP + 2 phosphate(in) + H(+). In terms of biological role, part of the ABC transporter complex PstSACB involved in phosphate import. Responsible for energy coupling to the transport system. This Trichodesmium erythraeum (strain IMS101) protein is Phosphate import ATP-binding protein PstB.